The primary structure comprises 1022 residues: Probable E3 ubiquitin-protein ligase HERC6 (1022 aa).

RCC1 repeat units lie at residues 41–92, 93–145, 147–198, 200–253, and 254–304; these read NHRV…AVCH, KGRV…ALSK, SQVF…ALSL, GTSF…VLTQ, and DGKV…AYVH. An HECT domain is found at 693–1017; sequence EATDFCKVLV…INNNRGFVSP (325 aa). C985 acts as the Glycyl thioester intermediate in catalysis.

As to expression, detected in brain, heart, placenta and testis.

The protein localises to the cytoplasm. The protein resides in the cytosol. It carries out the reaction S-ubiquitinyl-[E2 ubiquitin-conjugating enzyme]-L-cysteine + [acceptor protein]-L-lysine = [E2 ubiquitin-conjugating enzyme]-L-cysteine + N(6)-ubiquitinyl-[acceptor protein]-L-lysine.. It participates in protein modification; protein ubiquitination. E3 ubiquitin-protein ligase which accepts ubiquitin from an E2 ubiquitin-conjugating enzyme in the form of a thioester and then directly transfers the ubiquitin to targeted substrates. The polypeptide is Probable E3 ubiquitin-protein ligase HERC6 (HERC6) (Homo sapiens (Human)).